The chain runs to 148 residues: Fluoride-specific ion channel FluC 2 (148 aa).

The next 4 membrane-spanning stretches (helical) occupy residues 23-43, 61-81, 92-112, and 120-140; these read LGHLGWIFAGGALGAAARLAV, GTLAANAAGSFLIAIFGTLIF, FWVLGFLGSLTTFSSYALHTL, and LLGGLYGGGSLLLGLLAALAG. The Na(+) site is built by Gly99 and Thr102.

It belongs to the fluoride channel Fluc/FEX (TC 1.A.43) family.

It localises to the cell membrane. It carries out the reaction fluoride(in) = fluoride(out). With respect to regulation, na(+) is not transported, but it plays an essential structural role and its presence is essential for fluoride channel function. In terms of biological role, fluoride-specific ion channel. Important for reducing fluoride concentration in the cell, thus reducing its toxicity. This Rubrobacter xylanophilus (strain DSM 9941 / JCM 11954 / NBRC 16129 / PRD-1) protein is Fluoride-specific ion channel FluC 2.